Consider the following 341-residue polypeptide: L-threonine 3-dehydrogenase (341 aa).

Residue cysteine 38 coordinates Zn(2+). Active-site charge relay system residues include threonine 40 and histidine 43. Positions 63, 64, 93, 96, 99, and 107 each coordinate Zn(2+). NAD(+) contacts are provided by residues isoleucine 175, aspartate 195, arginine 200, 262–264 (LGI), and 286–287 (IY).

This sequence belongs to the zinc-containing alcohol dehydrogenase family. As to quaternary structure, homotetramer. The cofactor is Zn(2+).

The protein resides in the cytoplasm. It catalyses the reaction L-threonine + NAD(+) = (2S)-2-amino-3-oxobutanoate + NADH + H(+). It functions in the pathway amino-acid degradation; L-threonine degradation via oxydo-reductase pathway; glycine from L-threonine: step 1/2. Its function is as follows. Catalyzes the NAD(+)-dependent oxidation of L-threonine to 2-amino-3-ketobutyrate. In Shewanella oneidensis (strain ATCC 700550 / JCM 31522 / CIP 106686 / LMG 19005 / NCIMB 14063 / MR-1), this protein is L-threonine 3-dehydrogenase.